Reading from the N-terminus, the 680-residue chain is Trehalase (680 aa).

The tract at residues 1–27 is disordered; the sequence is MVLHAQPPDQSTETAREAKALAGATDG.

It belongs to the glycosyl hydrolase 15 family. As to quaternary structure, homomultimer. Phosphate serves as cofactor.

It carries out the reaction alpha,alpha-trehalose + H2O = alpha-D-glucose + beta-D-glucose. It functions in the pathway glycan degradation; trehalose degradation; D-glucose from alpha,alpha-trehalose: step 1/1. Its function is as follows. Catalyzes the hydrolysis of alpha,alpha-trehalose into two molecules of D-glucose. This Mycobacterium tuberculosis (strain ATCC 25618 / H37Rv) protein is Trehalase.